We begin with the raw amino-acid sequence, 235 residues long: Secretory carrier-associated membrane protein 5A (235 aa).

Over 1-39 (MSDKPNNFPPLPRFIPLKPCFYQDFDTDIPDLHRTTAKR) the chain is Cytoplasmic. A helical transmembrane segment spans residues 40–60 (LYYLWMLNSITLGVNLIGCLA). The Extracellular segment spans residues 61–67 (WLIGGGS). The chain crosses the membrane as a helical span at residues 68-88 (ATNFGLAFLWLILFTPCSYVC). The Cytoplasmic segment spans residues 89–102 (WFRPIYKAFKTDSS). The chain crosses the membrane as a helical span at residues 103–125 (FNFMAFFFTFTAQLVISIIQAVG). At 126-148 (IPGWGVCGWIASISFFGTNVGSA) the chain is on the extracellular side. The chain crosses the membrane as a helical span at residues 149–169 (VVMLIPTIMFTAVAVLSFVAL). Topologically, residues 170–235 (TKVHRFYRGA…TPNYGYSNEM (66 aa)) are cytoplasmic.

It belongs to the SCAMP family. SCAMP5 subfamily.

It localises to the cell membrane. The protein localises to the golgi apparatus membrane. The protein resides in the golgi apparatus. Its subcellular location is the trans-Golgi network membrane. It is found in the recycling endosome membrane. It localises to the cytoplasmic vesicle. The protein localises to the secretory vesicle. The protein resides in the synaptic vesicle membrane. Its function is as follows. Required for the calcium-dependent exocytosis of signal sequence-containing cytokines. Probably acts in cooperation with the SNARE machinery. The chain is Secretory carrier-associated membrane protein 5A (scamp5-a) from Xenopus laevis (African clawed frog).